The primary structure comprises 663 residues: MKTNLSSQITLHRVSPRYYRPENAFEKSVLTRLEKIPTDIYESVEEGANYIACEIAQTIREKQKAGRFCVLALPGGNSPSHVYSELIRMHKEEGLSFRNVIVFNMYEYYPLTADAINSNFNALKEMLLDHVDIDKQNIFTPDGTIAKDTIFEYCRLYEQRIESFGGIDIALLGIGRVGNIAFNEPGSRLNSTTRLILLDNASRNEASKIFGTIENTPISSITMGVSTILGAKKVYLLAWGENKAAMIKECVEGPISDTIPASYLQTHNNAHVAIDLSASMNLTRIQRPWLVTSCEWNDKLIRSAIVWLCQLTGKPILKLTNKDYNENGLSELLALFGSAYNVNIKIFNDLQHTITGWPGGKPNADDTYRPERAKPYPKRVVIFSPHPDDDVISMGGTLRRLVEQKHEVHVAYETSGNIAVGDEEVVRFMHFINGFNQIFNNSEDLVISEKYAEIRKFLKEKKDGDMDSRDILTIKGLIRRGEARTASSYNNIPLDRVHFLDLPFYETGKIQKNPISEADVEIVRNLLREIKPHQIFVAGDLADPHGTHRVCTDAVFAAVDLEKEEGAKWLKDCRIWMYRGAWAEWEIENIEMAVPISPEELRAKRNSILKHQSQMESAPFLGNDERLFWQRSEDRNRGTATLYDQLGLASYEAMEAFVEYIPL.

A glucosamine-6-phosphate deaminase-like region spans residues 1–290 (MKTNLSSQIT…NLTRIQRPWL (290 aa)). The active site involves glutamate 184.

It in the N-terminal section; belongs to the glucosamine/galactosamine-6-phosphate isomerase family. NagB subfamily.

In Bacteroides thetaiotaomicron (strain ATCC 29148 / DSM 2079 / JCM 5827 / CCUG 10774 / NCTC 10582 / VPI-5482 / E50), this protein is Putative glucosamine-6-phosphate deaminase-like protein BT_0258.